Reading from the N-terminus, the 201-residue chain is Ras-related protein Rab-9A (201 aa).

At Ala-2 the chain carries N-acetylalanine. Residue Gly-17 participates in GDP binding. Residues Gly-17, Val-18, Gly-19, Lys-20, Ser-21, Ser-22, Thr-34, His-38, and Thr-39 each contribute to the GTP site. GDP-binding residues include Gly-19, Lys-20, Ser-21, and Ser-22. Ser-21 lines the Mg(2+) pocket. The Switch 1 motif lies at 31-42; the sequence is KFDTQLFHTIGV. The Mg(2+) site is built by Thr-39 and Asp-62. A Switch 2 motif is present at residues 64-78; the sequence is AGQERFRSLRTPFYR. GTP-binding residues include Gly-65, Asn-124, Lys-125, Asp-127, Ala-155, and Lys-156. GDP-binding residues include Asn-124, Lys-125, Asp-127, Ala-155, and Lys-156. Ser-179 is modified (phosphoserine). Thr-187 carries the post-translational modification Phosphothreonine. Residues Cys-200 and Cys-201 are each lipidated (S-geranylgeranyl cysteine).

Belongs to the small GTPase superfamily. Rab family. As to quaternary structure, interacts (preferentially in its GTP-bound form) with GCC2 (via its GRIP domain). Interacts (GTP-bound form) with SGSM1; the GDP-bound form has much lower affinity for SGSM1. Interacts with SGSM2. The GTP-bound form but not the GDP-bound form interacts with HPS4 and BLOC-3 complex (heterodimer of HPS1 and HPS4) but does not interact with HPS1 alone. Interacts (GTP-bound form) with NDE1; two RAB9A-GTP molecules lie on the opposite sides of the NDE1 homodimer; the interaction leads to RAB9A-dynein motor tethering. Interacts (GTP-bound form) with NDEL1. It depends on Mg(2+) as a cofactor.

It localises to the cell membrane. The protein localises to the endoplasmic reticulum membrane. It is found in the golgi apparatus membrane. Its subcellular location is the late endosome. The protein resides in the cytoplasmic vesicle. It localises to the phagosome membrane. The protein localises to the phagosome. It is found in the cytoplasmic vesicle membrane. Its subcellular location is the melanosome. The catalysed reaction is GTP + H2O = GDP + phosphate + H(+). With respect to regulation, regulated by guanine nucleotide exchange factors (GEFs) which promote the exchange of bound GDP for free GTP. Regulated by GTPase activating proteins (GAPs) which increase the GTP hydrolysis activity. Inhibited by GDP dissociation inhibitors (GDIs). Functionally, the small GTPases Rab are key regulators of intracellular membrane trafficking, from the formation of transport vesicles to their fusion with membranes. Rabs cycle between an inactive GDP-bound form and an active GTP-bound form that is able to recruit to membranes different sets of downstream effectors directly responsible for vesicle formation, movement, tethering and fusion. RAB9A is involved in the transport of proteins between the endosomes and the trans-Golgi network (TGN). Specifically uses NDE1/NDEL1 as an effector to interact with the dynein motor complex in order to control retrograde trafficking of RAB9-associated late endosomes to the TGN. Involved in the recruitment of SGSM2 to melanosomes and is required for the proper trafficking of melanogenic enzymes TYR, TYRP1 and DCT/TYRP2 to melanosomes in melanocytes. The polypeptide is Ras-related protein Rab-9A (Homo sapiens (Human)).